The sequence spans 249 residues: DNA polymerase sliding clamp (249 aa).

This sequence belongs to the PCNA family. In terms of assembly, homotrimer. The subunits circularize to form a toroid; DNA passes through its center. Replication factor C (RFC) is required to load the toroid on the DNA.

Functionally, sliding clamp subunit that acts as a moving platform for DNA processing. Responsible for tethering the catalytic subunit of DNA polymerase and other proteins to DNA during high-speed replication. In Nanoarchaeum equitans (strain Kin4-M), this protein is DNA polymerase sliding clamp.